A 396-amino-acid chain; its full sequence is L-lactate dehydrogenase (396 aa).

Residues 1-380 (MIISAASDYR…SGDSLVQELG (380 aa)) enclose the FMN hydroxy acid dehydrogenase domain. Y24 is a substrate binding site. Residues S106 and Q127 each contribute to the FMN site. Residue Y129 participates in substrate binding. Residue T155 participates in FMN binding. A substrate-binding site is contributed by R164. Position 251 (K251) interacts with FMN. H275 acts as the Proton acceptor in catalysis. Substrate is bound at residue R278. Residue 306 to 330 (DSGIRNGLDVVRMIALGADTVLLGR) participates in FMN binding.

It belongs to the FMN-dependent alpha-hydroxy acid dehydrogenase family. It depends on FMN as a cofactor.

The protein resides in the cell inner membrane. It catalyses the reaction (S)-lactate + A = pyruvate + AH2. In terms of biological role, catalyzes the conversion of L-lactate to pyruvate. Is coupled to the respiratory chain. The protein is L-lactate dehydrogenase of Salmonella paratyphi C (strain RKS4594).